The primary structure comprises 168 residues: 2-C-methyl-D-erythritol 2,4-cyclodiphosphate synthase (168 aa).

A divalent metal cation contacts are provided by Asp13 and His15. Residues 13–15 (DVH) and 39–40 (HS) contribute to the 4-CDP-2-C-methyl-D-erythritol 2-phosphate site. His47 serves as a coordination point for a divalent metal cation. 4-CDP-2-C-methyl-D-erythritol 2-phosphate-binding positions include 61 to 63 (DIG), 66 to 70 (FPDTD), Phe144, and Lys147.

Belongs to the IspF family. As to quaternary structure, homotrimer. Requires a divalent metal cation as cofactor.

The catalysed reaction is 4-CDP-2-C-methyl-D-erythritol 2-phosphate = 2-C-methyl-D-erythritol 2,4-cyclic diphosphate + CMP. It functions in the pathway isoprenoid biosynthesis; isopentenyl diphosphate biosynthesis via DXP pathway; isopentenyl diphosphate from 1-deoxy-D-xylulose 5-phosphate: step 4/6. Functionally, involved in the biosynthesis of isopentenyl diphosphate (IPP) and dimethylallyl diphosphate (DMAPP), two major building blocks of isoprenoid compounds. Catalyzes the conversion of 4-diphosphocytidyl-2-C-methyl-D-erythritol 2-phosphate (CDP-ME2P) to 2-C-methyl-D-erythritol 2,4-cyclodiphosphate (ME-CPP) with a corresponding release of cytidine 5-monophosphate (CMP). In Cupriavidus metallidurans (strain ATCC 43123 / DSM 2839 / NBRC 102507 / CH34) (Ralstonia metallidurans), this protein is 2-C-methyl-D-erythritol 2,4-cyclodiphosphate synthase.